The chain runs to 663 residues: Epithelial sodium channel subunit gamma-2 (663 aa).

Residues 1–55 are Cytoplasmic-facing; that stretch reads MSNSGKKLTQKLKKNLPVTGPQAPTLYELMQWYCLNTNTHGCRRIVVSKGRLRRW. Residues 56 to 76 form a helical membrane-spanning segment; sequence IWIVLTLIAVALIFWQCALLL. The Extracellular portion of the chain corresponds to 77–544; it reads MTYYSVSASI…GGQLGLWMSC (468 aa). Disulfide bonds link cysteine 101–cysteine 286, cysteine 209–cysteine 217, cysteine 263–cysteine 270, cysteine 375–cysteine 460, cysteine 397–cysteine 456, cysteine 401–cysteine 452, cysteine 410–cysteine 437, and cysteine 412–cysteine 426. A helical membrane pass occupies residues 545–565; the sequence is SMVCGLEIVEVFFIDSFWVIL. Topologically, residues 566 to 663 are cytoplasmic; it reads RQKWHKLCNW…IDSDEDVERF (98 aa).

This sequence belongs to the amiloride-sensitive sodium channel (TC 1.A.6) family. SCNN1G subfamily. In terms of assembly, component of the heterotrimeric epithelial sodium channel (ENaC) composed of an alpha/SCNN1A, a beta/SCNN1B and a gamma/SCNN1G subunit.

It localises to the apical cell membrane. The catalysed reaction is Na(+)(in) = Na(+)(out). Its activity is regulated as follows. Originally identified and characterized by its inhibition by the diuretic drug amiloride. Functionally, this is one of the three pore-forming subunits of the heterotrimeric epithelial sodium channel (ENaC), a critical regulator of sodium balance and fluid homeostasis. ENaC operates in epithelial tissues, where it mediates the electrodiffusion of sodium ions from extracellular fluid through the apical membrane of cells, with water following osmotically. The chain is Epithelial sodium channel subunit gamma-2 (scnn1g-b) from Xenopus laevis (African clawed frog).